Here is a 592-residue protein sequence, read N- to C-terminus: Transducer of Cdc42-dependent actin assembly protein 1 homolog (592 aa).

The region spanning 3-267 is the F-BAR domain; the sequence is DSCSWDQLWD…DIGLIDPSRD (265 aa). Disordered regions lie at residues 343-366 and 447-519; these read FGGGTADKKTDSGDYGTLPPQQRA and SATS…DELY. The 78-residue stretch at 359-436 folds into the REM-1 domain; sequence TLPPQQRARK…IQKFKILLDD (78 aa). A coiled-coil region spans residues 363-441; sequence QQRARKIAGK…ILLDDVNAQL (79 aa). Polar residues predominate over residues 447-457; sequence SATSVGGSDTP. Residues 459–474 are compositionally biased toward low complexity; the sequence is SIRSVSSASSGVTSRV. The span at 495 to 510 shows a compositional bias: polar residues; that stretch reads FSGSNGGSDTDPTING. The SH3 domain maps to 527 to 589; it reads PVLGEAIAQF…PSSYLKVTWF (63 aa).

Belongs to the FNBP1 family. As to quaternary structure, interacts (via SH3 domain) with wsp-1. Interacts with cdc-42 and (via SH3 domain) with wve-1. As to expression, expressed in the germline and specifically in the gonads.

It localises to the cell junction. It is found in the apical cell membrane. The protein resides in the basolateral cell membrane. The protein localises to the cytoplasmic vesicle. Its subcellular location is the cytoplasm. It localises to the perinuclear region. It is found in the recycling endosome. Functionally, plays a role in protein trafficking, actin organization and embryonic morphogenesis. Potentially acts as a cdc-42 effector. May play a role in hypodermal P-cell nuclear positioning. Together with toca-2, is required for protein trafficking regulating yolk protein clathrin-mediated endocytosis by oocytes during oogenesis and retrograde recycling and the sorting of recycling endosome cargo proteins such as mig-14. Also, together with toca-2, controls the distribution of actin at cell junctions. The protein is Transducer of Cdc42-dependent actin assembly protein 1 homolog of Caenorhabditis elegans.